Here is a 308-residue protein sequence, read N- to C-terminus: Uridylate cyclase (308 aa).

The Mn(2+) site is built by Asp62 and Asp106.

The protein belongs to the adenylyl cyclase class-4/guanylyl cyclase family. Pyrimidine cyclase subfamily. As to quaternary structure, homodimer. The cofactor is Mn(2+).

The protein resides in the cytoplasm. It catalyses the reaction GTP = 3',5'-cyclic GMP + diphosphate. The enzyme catalyses UTP = 3',5'-cyclic UMP + diphosphate. Functionally, pycsar (pyrimidine cyclase system for antiphage resistance) provides immunity against bacteriophage. The pyrimidine cyclase (PycC) synthesizes cyclic nucleotides in response to infection; these serve as specific second messenger signals. The signals activate the adjacent effector, leading to bacterial cell death and abortive phage infection. A clade D Pycsar system. Its function is as follows. The pyrimidine cyclase gene of a two-gene Pycsar system, generates cyclic UMP (cUMP) from UTP as well as cGMP from GTP to a lesser extent, has little to no activity on ATP or CTP. Expression of this and adjacent effector PtPycTM (AC A0A4Q9KQH5) probably confers resistance to bacteriophage. The genes are probably only expressed in response to bacteriophage infection. The protein is Uridylate cyclase of Propioniciclava tarda.